Reading from the N-terminus, the 409-residue chain is Autophagy-related protein 37 (409 aa).

The Cytoplasmic portion of the chain corresponds to 1–313; it reads MSESIDRVFV…LKLIKTVIKH (313 aa). Residues 5-103 form the ACB domain; sequence IDRVFVKAIG…LIDTMKQFAS (99 aa). Residues 314 to 334 form a helical membrane-spanning segment; sequence VAIDAVIIAVLVAVIKRSIII. Over 335 to 409 the chain is Peroxisomal; the sequence is PNLISNEISL…VSRIRLIKRN (75 aa).

The protein belongs to the ATG37 family. Interacts with ATG30 and PEX3. In terms of processing, phosphorylated.

The protein localises to the peroxisome membrane. In terms of biological role, acyl-CoA binding protein which acts as the peroxisome receptor for pexophagy. Required for both micropexophagy and macropexophagy, but not for the cytoplasm to vacuole transport (Cvt) or autophagy pathways. Required for functional micropexophagic apparatus (MIPA) and relocation of ATG11 to the peroxisome-sequestering arms of the vacuole. Binds palmitoyl-CoA but not oleyl-CoA. The protein is Autophagy-related protein 37 of Komagataella phaffii (strain GS115 / ATCC 20864) (Yeast).